The following is an 85-amino-acid chain: MSDGGKTKTTVEIYGQSYTIIGQETKMHMRHVASIVDDKMREINEKNPYLDINKLAVLTAVNVVHDYLKLKEQYEKLEIQLKEKE.

Positions 60-85 (AVNVVHDYLKLKEQYEKLEIQLKEKE) form a coiled coil.

This sequence belongs to the ZapA family. Type 2 subfamily. In terms of assembly, homodimer. Interacts with FtsZ.

Its subcellular location is the cytoplasm. In terms of biological role, activator of cell division through the inhibition of FtsZ GTPase activity, therefore promoting FtsZ assembly into bundles of protofilaments necessary for the formation of the division Z ring. It is recruited early at mid-cell but it is not essential for cell division. The protein is Cell division protein ZapA of Bacillus pumilus (strain SAFR-032).